Reading from the N-terminus, the 649-residue chain is Transcription factor E2-alpha (649 aa).

Disordered stretches follow at residues 34–107, 127–206, 222–267, 291–325, and 339–382; these read GKGR…SERS, LPGE…SAKT, LHPS…GLQQ, SAAP…SSSG, and DHSS…DGGL. Composition is skewed to polar residues over residues 56–76 and 85–94; these read SSGS…SRTY and SHNSLPSSTF. Residues 127–143 show a composition bias toward low complexity; the sequence is LPGELGLSSPGPLSPSG. Phosphoserine occurs at positions 135 and 140. Over residues 145–156 the composition is skewed to polar residues; it reads KSGSQYYPSYPS. Residues 171–177 carry the Nuclear localization signal motif; the sequence is SKKVRKV. 2 stretches are compositionally biased toward low complexity: residues 182-193 and 242-259; these read PSSVYPSSSGDS and GDGS…SVGS. The span at 339–352 shows a compositional bias: low complexity; sequence DHSSNNFSPSPSTP. Thr351 carries the phosphothreonine modification. At Ser355 the chain carries Phosphoserine. Arg367 carries the post-translational modification Omega-N-methylarginine. Residue Ser375 is modified to Phosphoserine. The segment at 385-420 is leucine-zipper; that stretch reads LSKMEDRLDEAIHVLRSHAVGTASDLHGLLPGHGAL. Positions 431–547 are disordered; that stretch reads GGRHAGLVGG…KAEREKERRV (117 aa). Positions 448–469 are enriched in polar residues; sequence TSGTSLLHTHASLPSQASSLPD. Lys494 is covalently cross-linked (Glycyl lysine isopeptide (Lys-Gly) (interchain with G-Cter in SUMO2)). Ser524 carries the post-translational modification Phosphoserine. Glu529 is subject to Phosphothreonine. Over residues 537–547 the composition is skewed to basic and acidic residues; the sequence is QKAEREKERRV. The region spanning 544-597 is the bHLH domain; it reads ERRVANNARERLRVRDINEAFKELGRMCQLHLSSEKPQTKLLILHQAVAVILSL. Lys620 is covalently cross-linked (Glycyl lysine isopeptide (Lys-Gly) (interchain with G-Cter in SUMO2)).

As to quaternary structure, homodimer. Heterodimer; efficient DNA binding requires dimerization with another bHLH protein. Forms a heterodimer with TWIST1 and TWIST2. Forms a heterodimer with NEUROD1; the heterodimer is inhibited in presence of ID2, but not NR0B2, to E-box element. Forms a heterodimer with TCF15; the heterodimer binds E-box element. Forms a heterodimer with MYOG; heterodimerization enhances MYOG DNA-binding and transcriptional activities. Forms a heterodimer with ATOH8; repress transcription of TCF3 and TCF3-NEUROG3 dimer-induced transactivation of E box-dependent promoters. Component of a nuclear TAL-1 complex composed at least of CBFA2T3, LDB1, TAL1 and TCF3. Interacts with NEUROD2. Interacts with EP300. Interacts with PTF1A, TGFB1I1 and UBE2I. Interacts with BHLHA9. Interacts with ASB2; the interaction is mediated by SKP2 and targets TCF3 for Notch-induced proteasomal degradation. Interacts with transcription factor ASCL5/AmeloD. Interacts with RALGAPA1. Interacts with FIGLA. In terms of assembly, forms a heterodimer with ATOH7; required for ATOH7 DNA-binding. In terms of processing, phosphorylated following NGF stimulation. Undergoes Notch-induced ubiquitination and subsequent proteasomal degradation which is mediated by ASB1 or ASB2, the substrate-recognition components of probable ECS E3 ubiquitin-protein ligase complexes.

It localises to the nucleus. Transcriptional regulator. Involved in the initiation of neuronal differentiation and mesenchymal to epithelial transition. Heterodimers between TCF3 and tissue-specific basic helix-loop-helix (bHLH) proteins play major roles in determining tissue-specific cell fate during embryogenesis, like muscle or early B-cell differentiation. Together with TCF15, required for the mesenchymal to epithelial transition. Dimers bind DNA on E-box motifs: 5'-CANNTG-3'. Binds to the kappa-E2 site in the kappa immunoglobulin gene enhancer. Binds to IEB1 and IEB2, which are short DNA sequences in the insulin gene transcription control region. Functionally, facilitates ATOH7 binding to DNA at the consensus sequence 5'-CAGGTG-3', and positively regulates transcriptional activity. The polypeptide is Transcription factor E2-alpha (TCF3) (Mesocricetus auratus (Golden hamster)).